The primary structure comprises 702 residues: Elongation factor G (702 aa).

The tr-type G domain occupies 8–290; it reads SRYRNIGISA…AIIEFLPAPN (283 aa). Residues 17–24, 88–92, and 142–145 each bind GTP; these read AHIDAGKT, DTPGH, and NKMD.

Belongs to the TRAFAC class translation factor GTPase superfamily. Classic translation factor GTPase family. EF-G/EF-2 subfamily.

Its subcellular location is the cytoplasm. In terms of biological role, catalyzes the GTP-dependent ribosomal translocation step during translation elongation. During this step, the ribosome changes from the pre-translocational (PRE) to the post-translocational (POST) state as the newly formed A-site-bound peptidyl-tRNA and P-site-bound deacylated tRNA move to the P and E sites, respectively. Catalyzes the coordinated movement of the two tRNA molecules, the mRNA and conformational changes in the ribosome. The chain is Elongation factor G from Buchnera aphidicola subsp. Acyrthosiphon pisum (strain 5A).